A 375-amino-acid chain; its full sequence is Peptidyl-prolyl cis-trans isomerase D (375 aa).

One can recognise a PPIase cyclophilin-type domain in the interval 7 to 169 (YFDITIANEP…QAVTISSAGV (163 aa)). TPR repeat units lie at residues 217–250 (AGKL…LDVH), 270–307 (LPLL…PNLS), and 312–345 (GKAL…VPGD).

The protein belongs to the cyclophilin-type PPIase family. PPIase D subfamily.

The protein localises to the cytoplasm. It carries out the reaction [protein]-peptidylproline (omega=180) = [protein]-peptidylproline (omega=0). PPIases accelerate the folding of proteins. It catalyzes the cis-trans isomerization of proline imidic peptide bonds in oligopeptides. The protein is Peptidyl-prolyl cis-trans isomerase D (CPR6) of Cryptococcus neoformans var. neoformans serotype D (strain JEC21 / ATCC MYA-565) (Filobasidiella neoformans).